A 442-amino-acid chain; its full sequence is ATP-dependent protease ATPase subunit HslU (442 aa).

ATP contacts are provided by residues I18, 60 to 65 (GVGKTE), D255, E320, and R392.

The protein belongs to the ClpX chaperone family. HslU subfamily. A double ring-shaped homohexamer of HslV is capped on each side by a ring-shaped HslU homohexamer. The assembly of the HslU/HslV complex is dependent on binding of ATP.

It is found in the cytoplasm. ATPase subunit of a proteasome-like degradation complex; this subunit has chaperone activity. The binding of ATP and its subsequent hydrolysis by HslU are essential for unfolding of protein substrates subsequently hydrolyzed by HslV. HslU recognizes the N-terminal part of its protein substrates and unfolds these before they are guided to HslV for hydrolysis. This chain is ATP-dependent protease ATPase subunit HslU, found in Hahella chejuensis (strain KCTC 2396).